Reading from the N-terminus, the 248-residue chain is Triosephosphate isomerase (248 aa).

Asn-9–Lys-11 serves as a coordination point for substrate. Residue His-94 is the Electrophile of the active site. The active-site Proton acceptor is the Glu-166. Substrate-binding positions include Gly-172, Ser-211, and Gly-232–Gly-233.

Belongs to the triosephosphate isomerase family. Homodimer.

The protein resides in the cytoplasm. The catalysed reaction is D-glyceraldehyde 3-phosphate = dihydroxyacetone phosphate. It functions in the pathway carbohydrate biosynthesis; gluconeogenesis. The protein operates within carbohydrate degradation; glycolysis; D-glyceraldehyde 3-phosphate from glycerone phosphate: step 1/1. Its function is as follows. Involved in the gluconeogenesis. Catalyzes stereospecifically the conversion of dihydroxyacetone phosphate (DHAP) to D-glyceraldehyde-3-phosphate (G3P). The chain is Triosephosphate isomerase from Herminiimonas arsenicoxydans.